A 186-amino-acid polypeptide reads, in one-letter code: MVEELPSVFLVGPMGAGKTTIGRLLAKQLGRSFVDSDWYIESQTGADIAWIFAKEGEAGFRERETRAIDELTQQPQIVLATGGGAVMAAENREYLKQRGIVIYLNAPVDVQMARTAKDKSRPLLQQPNPRKILQGLYSARDPLYREVAHIIMPTGHTYPRHMVNQLLQQLNSFCISTSVDSEPEKD.

ATP is bound at residue Gly-15–Thr-20. Thr-19 provides a ligand contact to Mg(2+). The substrate site is built by Asp-37, Arg-61, and Gly-83. ATP is bound at residue Arg-121. A substrate-binding site is contributed by Arg-140.

The protein belongs to the shikimate kinase family. As to quaternary structure, monomer. Mg(2+) serves as cofactor.

The protein resides in the cytoplasm. It catalyses the reaction shikimate + ATP = 3-phosphoshikimate + ADP + H(+). Its pathway is metabolic intermediate biosynthesis; chorismate biosynthesis; chorismate from D-erythrose 4-phosphate and phosphoenolpyruvate: step 5/7. Its function is as follows. Catalyzes the specific phosphorylation of the 3-hydroxyl group of shikimic acid using ATP as a cosubstrate. The protein is Shikimate kinase of Psychrobacter cryohalolentis (strain ATCC BAA-1226 / DSM 17306 / VKM B-2378 / K5).